A 177-amino-acid chain; its full sequence is Calcineurin subunit B (177 aa).

EF-hand domains follow at residues 25–60 (KEIK…AVNP), 62–92 (VKRV…FNAQ), 94–129 (DKQR…MVGN), and 135–170 (QLQQ…QDLE). Ca(2+)-binding residues include Asp38, Asp40, Asn42, Thr44, Glu49, Asp70, Asn72, Asp74, Ser76, Glu81, Asp107, Asp109, Asp111, Tyr113, Glu118, Asp148, Asp150, Asp152, Lys154, and Glu159.

The protein belongs to the calcineurin regulatory subunit family. In terms of assembly, composed of a catalytic subunit (A) and a regulatory subunit (B).

Functionally, regulatory subunit of calcineurin, a calcium-dependent, calmodulin stimulated protein phosphatase. Confers calcium sensitivity. The polypeptide is Calcineurin subunit B (CNB1) (Naegleria gruberi (Amoeba)).